The following is a 511-amino-acid chain: Bifunctional purine biosynthesis protein PurH (511 aa).

The 145-residue stretch at 1–145 (MKQRALVSVS…KNHKFVSVIV (145 aa)) folds into the MGS-like domain.

This sequence belongs to the PurH family.

It catalyses the reaction (6R)-10-formyltetrahydrofolate + 5-amino-1-(5-phospho-beta-D-ribosyl)imidazole-4-carboxamide = 5-formamido-1-(5-phospho-D-ribosyl)imidazole-4-carboxamide + (6S)-5,6,7,8-tetrahydrofolate. It carries out the reaction IMP + H2O = 5-formamido-1-(5-phospho-D-ribosyl)imidazole-4-carboxamide. Its pathway is purine metabolism; IMP biosynthesis via de novo pathway; 5-formamido-1-(5-phospho-D-ribosyl)imidazole-4-carboxamide from 5-amino-1-(5-phospho-D-ribosyl)imidazole-4-carboxamide (10-formyl THF route): step 1/1. The protein operates within purine metabolism; IMP biosynthesis via de novo pathway; IMP from 5-formamido-1-(5-phospho-D-ribosyl)imidazole-4-carboxamide: step 1/1. The protein is Bifunctional purine biosynthesis protein PurH of Bacillus cereus (strain AH187).